Reading from the N-terminus, the 157-residue chain is Peptide methionine sulfoxide reductase MsrA (157 aa).

Cys-10 is a catalytic residue.

Belongs to the MsrA Met sulfoxide reductase family.

It carries out the reaction L-methionyl-[protein] + [thioredoxin]-disulfide + H2O = L-methionyl-(S)-S-oxide-[protein] + [thioredoxin]-dithiol. It catalyses the reaction [thioredoxin]-disulfide + L-methionine + H2O = L-methionine (S)-S-oxide + [thioredoxin]-dithiol. In terms of biological role, has an important function as a repair enzyme for proteins that have been inactivated by oxidation. Catalyzes the reversible oxidation-reduction of methionine sulfoxide in proteins to methionine. The polypeptide is Peptide methionine sulfoxide reductase MsrA (Clostridium botulinum (strain Loch Maree / Type A3)).